Reading from the N-terminus, the 464-residue chain is Arginine biosynthesis bifunctional protein ArgJ, mitochondrial (464 aa).

6 residues coordinate substrate: T191, K220, T231, E318, N459, and T464. The Nucleophile role is filled by T231.

This sequence belongs to the ArgJ family. Heterodimer of an alpha and a beta chain. The alpha and beta chains are autoproteolytically processed from a single precursor protein within the mitochondrion.

The protein resides in the mitochondrion matrix. It carries out the reaction N(2)-acetyl-L-ornithine + L-glutamate = N-acetyl-L-glutamate + L-ornithine. The catalysed reaction is L-glutamate + acetyl-CoA = N-acetyl-L-glutamate + CoA + H(+). Its pathway is amino-acid biosynthesis; L-arginine biosynthesis; L-ornithine and N-acetyl-L-glutamate from L-glutamate and N(2)-acetyl-L-ornithine (cyclic): step 1/1. It participates in amino-acid biosynthesis; L-arginine biosynthesis; N(2)-acetyl-L-ornithine from L-glutamate: step 1/4. Its function is as follows. Catalyzes two activities which are involved in the cyclic version of arginine biosynthesis: the synthesis of acetylglutamate from glutamate and acetyl-CoA, and of ornithine by transacetylation between acetylornithine and glutamate. The sequence is that of Arginine biosynthesis bifunctional protein ArgJ, mitochondrial from Pyricularia oryzae (strain 70-15 / ATCC MYA-4617 / FGSC 8958) (Rice blast fungus).